A 606-amino-acid polypeptide reads, in one-letter code: Sodium-independent sulfate anion transporter (606 aa).

The Extracellular segment spans residues 1–51 (MPSSVTALGQARSSGPGMAPSACCCSPAALQRRLPILAWLPSYSLQWLKMD). The chain crosses the membrane as a helical span at residues 52–72 (FVAGLSVGLTAIPQALAYAEV). Ala-73 is a topological domain (cytoplasmic). The chain crosses the membrane as a helical span at residues 74-94 (GLPPQYGLYSAFMGCFVYFFL). At 95–100 (GTSRDV) the chain is on the extracellular side. The chain crosses the membrane as a helical span at residues 101 to 117 (TLGPTAIMSLLVSFYTF). Over 118 to 119 (HE) the chain is Cytoplasmic. A helical transmembrane segment spans residues 120–140 (PAYAVLLAFLSGCIQLAMGVL). At 141-147 (RLGFLLD) the chain is on the extracellular side. The chain crosses the membrane as a helical span at residues 148–168 (FISYPVIKGFTSAAAVTIGFG). At 169–197 (QIKNLLGLQNIPRPFFLQVYHTFLRIAET) the chain is on the cytoplasmic side. The chain crosses the membrane as a helical span at residues 198–218 (RVGDAVLGLVCMLLLLVLKLM). Over 219 to 250 (RDHVPPVHPEMPPGVRLSRGLVWAATTARNAL) the chain is Extracellular. The chain crosses the membrane as a helical span at residues 251–271 (VVSFAALVAYSFEVTGYQPFI). The Cytoplasmic segment spans residues 272–307 (LTGETAEGLPPVRIPPFSVTTANGTISFTEMVQDMG). Residues 308 to 328 (AGLAVVPLMGLLESIAVAKAF) traverse the membrane as a helical segment. Residues 329 to 341 (ASQNNYRIDANQE) are Extracellular-facing. The helical transmembrane segment at 342-362 (LLAIGLTNMLGSLVSSYPVTG) threads the bilayer. Residues 363–374 (SFGRTAVNAQSG) are Cytoplasmic-facing. The helical transmembrane segment at 375–395 (VCTPAGGLVTGVLVLLSLDYL) threads the bilayer. At 396-398 (TSL) the chain is on the extracellular side. Residues 399–419 (FYYIPKSALAAVIIMAVAPLF) form a helical membrane-spanning segment. Topologically, residues 420–441 (DTKIFRTLWRVKRLDLLPLCVT) are cytoplasmic. A helical transmembrane segment spans residues 442–462 (FLLCFWEVQYGILAGALVSLL). Over 463-606 (MLLHSAARPE…LDQKVALLKA (144 aa)) the chain is Extracellular. The STAS domain maps to 470–584 (RPETKVSEGP…EAEKHLRQEP (115 aa)).

The protein belongs to the SLC26A/SulP transporter (TC 2.A.53) family. In terms of tissue distribution, detected in all tissues tested with highest expression observed in brain, kidney, HEVEC and placenta and lowest in pancreas, skeletal muscle, liver, lung and heart.

Its subcellular location is the cell membrane. It localises to the lysosome membrane. The protein resides in the apical cell membrane. The protein localises to the basolateral cell membrane. The catalysed reaction is hydrogencarbonate(in) + chloride(out) = hydrogencarbonate(out) + chloride(in). It catalyses the reaction sulfate(in) + H(+)(in) = sulfate(out) + H(+)(out). It carries out the reaction oxalate(in) + chloride(out) = oxalate(out) + chloride(in). Sodium-independent anion exchanger mediating bicarbonate, chloride, sulfate and oxalate transport. Exhibits sodium-independent sulfate anion transporter activity that may cooperate with SLC26A2 to mediate DIDS-sensitive sulfate uptake into high endothelial venules endothelial cells (HEVEC). In the kidney, mediates chloride-bicarbonate exchange, facilitating V-ATPase-mediated acid secretion. May function as a chloride channel, playing an important role in moderating chloride homeostasis and neuronal activity in the cerebellum. This Homo sapiens (Human) protein is Sodium-independent sulfate anion transporter.